The primary structure comprises 418 residues: uncharacterized protein (418 aa).

This is an uncharacterized protein from Saccharomyces cerevisiae (strain ATCC 204508 / S288c) (Baker's yeast).